Consider the following 496-residue polypeptide: Probable cytosol aminopeptidase (496 aa).

Mn(2+)-binding residues include Lys258 and Asp263. Residue Lys270 is part of the active site. Positions 281, 340, and 342 each coordinate Mn(2+). Arg344 is a catalytic residue.

The protein belongs to the peptidase M17 family. Mn(2+) is required as a cofactor.

Its subcellular location is the cytoplasm. It catalyses the reaction Release of an N-terminal amino acid, Xaa-|-Yaa-, in which Xaa is preferably Leu, but may be other amino acids including Pro although not Arg or Lys, and Yaa may be Pro. Amino acid amides and methyl esters are also readily hydrolyzed, but rates on arylamides are exceedingly low.. It carries out the reaction Release of an N-terminal amino acid, preferentially leucine, but not glutamic or aspartic acids.. Functionally, presumably involved in the processing and regular turnover of intracellular proteins. Catalyzes the removal of unsubstituted N-terminal amino acids from various peptides. This chain is Probable cytosol aminopeptidase, found in Helicobacter pylori (strain HPAG1).